Reading from the N-terminus, the 277-residue chain is Undecaprenyl-diphosphatase (277 aa).

The next 7 helical transmembrane spans lie at 3–23 (IVLL…EFLP), 43–63 (VGKV…ILVY), 85–105 (LNVL…GKAI), 109–129 (LFTP…ILWA), 189–209 (TDFS…YSLF), 218–238 (ADLP…WLCI), and 249–269 (SFVG…ATAW).

It belongs to the UppP family.

It localises to the cell inner membrane. It catalyses the reaction di-trans,octa-cis-undecaprenyl diphosphate + H2O = di-trans,octa-cis-undecaprenyl phosphate + phosphate + H(+). Catalyzes the dephosphorylation of undecaprenyl diphosphate (UPP). Confers resistance to bacitracin. This is Undecaprenyl-diphosphatase from Albidiferax ferrireducens (strain ATCC BAA-621 / DSM 15236 / T118) (Rhodoferax ferrireducens).